Consider the following 297-residue polypeptide: Probable GTP 3',8-cyclase (297 aa).

A Radical SAM core domain is found at 4-220 (EFGREIRSFR…VVTRKFMQNR (217 aa)). R13 is a binding site for GTP. [4Fe-4S] cluster contacts are provided by C20 and C24. Y26 is a binding site for S-adenosyl-L-methionine. [4Fe-4S] cluster is bound at residue C27. K61 provides a ligand contact to GTP. G65 lines the S-adenosyl-L-methionine pocket. T91 is a binding site for GTP. S115 contacts S-adenosyl-L-methionine. A GTP-binding site is contributed by K151. 2 residues coordinate [4Fe-4S] cluster: C242 and C245. GTP is bound at residue 247 to 249 (RIR). Residue C259 coordinates [4Fe-4S] cluster.

The protein belongs to the radical SAM superfamily. MoaA family. [4Fe-4S] cluster is required as a cofactor.

It carries out the reaction GTP + AH2 + S-adenosyl-L-methionine = (8S)-3',8-cyclo-7,8-dihydroguanosine 5'-triphosphate + 5'-deoxyadenosine + L-methionine + A + H(+). It participates in cofactor biosynthesis; molybdopterin biosynthesis. Functionally, catalyzes the cyclization of GTP to (8S)-3',8-cyclo-7,8-dihydroguanosine 5'-triphosphate. The protein is Probable GTP 3',8-cyclase of Methanococcus vannielii (strain ATCC 35089 / DSM 1224 / JCM 13029 / OCM 148 / SB).